The sequence spans 151 residues: Putative pre-16S rRNA nuclease (151 aa).

It belongs to the YqgF nuclease family.

It is found in the cytoplasm. Could be a nuclease involved in processing of the 5'-end of pre-16S rRNA. This chain is Putative pre-16S rRNA nuclease, found in Methylococcus capsulatus (strain ATCC 33009 / NCIMB 11132 / Bath).